The following is a 274-amino-acid chain: NADPH-dependent 7-cyano-7-deazaguanine reductase (274 aa).

Substrate is bound at residue 81 to 83 (IES). Position 83–84 (83–84 (SK)) interacts with NADPH. Residue cysteine 182 is the Thioimide intermediate of the active site. Aspartate 189 functions as the Proton donor in the catalytic mechanism. Residue 221–222 (HE) coordinates substrate. Position 250-251 (250-251 (RG)) interacts with NADPH.

Belongs to the GTP cyclohydrolase I family. QueF type 2 subfamily. In terms of assembly, homodimer.

It localises to the cytoplasm. The enzyme catalyses 7-aminomethyl-7-carbaguanine + 2 NADP(+) = 7-cyano-7-deazaguanine + 2 NADPH + 3 H(+). It participates in tRNA modification; tRNA-queuosine biosynthesis. Its function is as follows. Catalyzes the NADPH-dependent reduction of 7-cyano-7-deazaguanine (preQ0) to 7-aminomethyl-7-deazaguanine (preQ1). The protein is NADPH-dependent 7-cyano-7-deazaguanine reductase of Hahella chejuensis (strain KCTC 2396).